The chain runs to 101 residues: Enhancer of yellow 2 transcription factor (101 aa).

The protein belongs to the ENY2 family. In terms of assembly, component of the nuclear pore complex (NPC)-associated TREX-2/AMEX complex (anchoring and mRNA export complex), composed of e(y)2, xmas and PCID2. Within the TREX-2/ AMEX complex, interactions with xmas is required for localization to the nuclear periphery. Component of the SAGA transcription coactivator-HAT complexes, at least composed of Ada2b, e(y)2, Pcaf/Gcn5, Taf10 and Nipped-A/Trrap. Within the SAGA complex, e(y)2, Sgf11, and not/nonstop form an additional subcomplex of SAGA called the DUB module (deubiquitination module). Component of the THO complex, composed of at least e(y)2, HPR1, THO2, THOC5, THOC6 and THOC7. Interacts with Taf9. Interacts with su(Hw) (via zinc fingers). Interacts with the nuclear pore complex (NPC). Interaction between the TREX-2/AMEX complex and the ORC complex is required for ORC localization to mRNPs, and consequently mRNA export. Within the TREX-2/AMEX-ORC complex, interacts with Orc6 and (via N-terminus or C-terminus) with Orc3. Interacts with the zinc finger protein CG9890. In terms of tissue distribution, ubiquitous.

It localises to the nucleus. The protein localises to the nucleoplasm. Its subcellular location is the cytoplasm. The protein resides in the nucleus membrane. Functionally, involved in mRNA export coupled transcription activation by association with both the TREX-2/AMEX and the SAGA complexes. The SAGA complex is a multiprotein complex that activates transcription by remodeling chromatin and mediating histone acetylation and deubiquitination. Within the SAGA complex, participates in a subcomplex that specifically deubiquitinates histone H2B. The SAGA complex is recruited to specific gene promoters by activators, where it is required for transcription. Required for nuclear receptor-mediated transactivation. Involved in transcription elongation by recruiting the THO complex onto nascent mRNA. The TREX-2/AMEX complex functions in docking export-competent ribonucleoprotein particles (mRNPs) to the nuclear entrance of the nuclear pore complex (nuclear basket). TREX-2/AMEX participates in mRNA export and accurate chromatin positioning in the nucleus by tethering genes to the nuclear periphery. Recruited to the su(Hw) insulators via its interaction with su(Hw) and participates in the barrier activity of such insulators. In contrast, it does not participate in the enhancer-blocking activity of the su(Hw) insulators. The chain is Enhancer of yellow 2 transcription factor from Drosophila melanogaster (Fruit fly).